A 438-amino-acid polypeptide reads, in one-letter code: UDP-N-acetylmuramoylalanine--D-glutamate ligase (438 aa).

112-118 (GSNGKST) is an ATP binding site.

Belongs to the MurCDEF family.

It localises to the cytoplasm. The enzyme catalyses UDP-N-acetyl-alpha-D-muramoyl-L-alanine + D-glutamate + ATP = UDP-N-acetyl-alpha-D-muramoyl-L-alanyl-D-glutamate + ADP + phosphate + H(+). The protein operates within cell wall biogenesis; peptidoglycan biosynthesis. Functionally, cell wall formation. Catalyzes the addition of glutamate to the nucleotide precursor UDP-N-acetylmuramoyl-L-alanine (UMA). This chain is UDP-N-acetylmuramoylalanine--D-glutamate ligase, found in Sodalis glossinidius (strain morsitans).